A 152-amino-acid chain; its full sequence is UPF0178 protein SAR0734 (152 aa).

It belongs to the UPF0178 family.

This chain is UPF0178 protein SAR0734, found in Staphylococcus aureus (strain MRSA252).